Reading from the N-terminus, the 351-residue chain is Heat-inducible transcription repressor HrcA (351 aa).

Belongs to the HrcA family.

Its function is as follows. Negative regulator of class I heat shock genes (grpE-dnaK-dnaJ and groELS operons). Prevents heat-shock induction of these operons. The sequence is that of Heat-inducible transcription repressor HrcA from Beutenbergia cavernae (strain ATCC BAA-8 / DSM 12333 / CCUG 43141 / JCM 11478 / NBRC 16432 / NCIMB 13614 / HKI 0122).